The following is a 122-amino-acid chain: Large ribosomal subunit protein uL14 (122 aa).

This sequence belongs to the universal ribosomal protein uL14 family. In terms of assembly, part of the 50S ribosomal subunit. Forms a cluster with proteins L3 and L19. In the 70S ribosome, L14 and L19 interact and together make contacts with the 16S rRNA in bridges B5 and B8.

Functionally, binds to 23S rRNA. Forms part of two intersubunit bridges in the 70S ribosome. This is Large ribosomal subunit protein uL14 from Bradyrhizobium diazoefficiens (strain JCM 10833 / BCRC 13528 / IAM 13628 / NBRC 14792 / USDA 110).